A 178-amino-acid chain; its full sequence is NAD(P)H-quinone oxidoreductase subunit J (178 aa).

This sequence belongs to the complex I 30 kDa subunit family. NDH-1 can be composed of about 15 different subunits; different subcomplexes with different compositions have been identified which probably have different functions.

The protein resides in the cellular thylakoid membrane. The catalysed reaction is a plastoquinone + NADH + (n+1) H(+)(in) = a plastoquinol + NAD(+) + n H(+)(out). It carries out the reaction a plastoquinone + NADPH + (n+1) H(+)(in) = a plastoquinol + NADP(+) + n H(+)(out). Its function is as follows. NDH-1 shuttles electrons from an unknown electron donor, via FMN and iron-sulfur (Fe-S) centers, to quinones in the respiratory and/or the photosynthetic chain. The immediate electron acceptor for the enzyme in this species is believed to be plastoquinone. Couples the redox reaction to proton translocation, and thus conserves the redox energy in a proton gradient. Cyanobacterial NDH-1 also plays a role in inorganic carbon-concentration. In Crocosphaera subtropica (strain ATCC 51142 / BH68) (Cyanothece sp. (strain ATCC 51142)), this protein is NAD(P)H-quinone oxidoreductase subunit J.